Consider the following 116-residue polypeptide: UPF0499 protein ATEG_06693 (116 aa).

The N-terminal stretch at 1-18 is a signal peptide; it reads MKLTGLLSLALLTTLALA. Intrachain disulfides connect C32–C46, C36–C49, and C42–C54.

This sequence belongs to the UPF0499 family.

Its subcellular location is the secreted. This chain is UPF0499 protein ATEG_06693, found in Aspergillus terreus (strain NIH 2624 / FGSC A1156).